Reading from the N-terminus, the 247-residue chain is MKKLIVLALVVSVAVAGGWLWMKSGNPDALRHIVLEQCLVNQQQHRNPAPCAQVKPDAGYVVFKDRNGPLQYLLMPTYRINGTESPLLTEPQTPNFFWLAWQSRNFMSMKRGTEVPDSAIALTINSPTGRTQNHFHIHISCLRPDVREKLDANQGQISTQWLPFPGGLEGHEYLARRVTEAELVKRSPFMMLAQELPQAREHMGRFAMAMAQQSDGSFVLLATERNLLVLNRASAEELQDHQCDILN.

The helical transmembrane segment at 5-22 threads the bilayer; the sequence is IVLALVVSVAVAGGWLWM.

It belongs to the Cdh family.

The protein resides in the cell inner membrane. The catalysed reaction is a CDP-1,2-diacyl-sn-glycerol + H2O = a 1,2-diacyl-sn-glycero-3-phosphate + CMP + 2 H(+). It functions in the pathway phospholipid metabolism; CDP-diacylglycerol degradation; phosphatidate from CDP-diacylglycerol: step 1/1. The sequence is that of CDP-diacylglycerol pyrophosphatase from Enterobacter sp. (strain 638).